The primary structure comprises 218 residues: Protein-L-isoaspartate O-methyltransferase (218 aa).

S66 is an active-site residue.

The protein belongs to the methyltransferase superfamily. L-isoaspartyl/D-aspartyl protein methyltransferase family.

Its subcellular location is the cytoplasm. It carries out the reaction [protein]-L-isoaspartate + S-adenosyl-L-methionine = [protein]-L-isoaspartate alpha-methyl ester + S-adenosyl-L-homocysteine. Catalyzes the methyl esterification of L-isoaspartyl residues in peptides and proteins that result from spontaneous decomposition of normal L-aspartyl and L-asparaginyl residues. It plays a role in the repair and/or degradation of damaged proteins. This Caulobacter sp. (strain K31) protein is Protein-L-isoaspartate O-methyltransferase.